A 182-amino-acid chain; its full sequence is UPF0301 protein MCA0413 1 (182 aa).

The protein belongs to the UPF0301 (AlgH) family.

This is UPF0301 protein MCA0413 1 from Methylococcus capsulatus (strain ATCC 33009 / NCIMB 11132 / Bath).